The chain runs to 160 residues: Cytochrome b6-f complex subunit 4 (160 aa).

3 helical membrane passes run 36 to 56, 95 to 115, and 131 to 151; these read LLYM…GLAV, LLGV…PFIE, and TVFL…CLPI.

This sequence belongs to the cytochrome b family. PetD subfamily. In terms of assembly, the 4 large subunits of the cytochrome b6-f complex are cytochrome b6, subunit IV (17 kDa polypeptide, petD), cytochrome f and the Rieske protein, while the 4 small subunits are petG, petL, petM and petN. The complex functions as a dimer.

It is found in the plastid. Its subcellular location is the chloroplast thylakoid membrane. Component of the cytochrome b6-f complex, which mediates electron transfer between photosystem II (PSII) and photosystem I (PSI), cyclic electron flow around PSI, and state transitions. In Tupiella akineta (Green alga), this protein is Cytochrome b6-f complex subunit 4.